A 147-amino-acid chain; its full sequence is Hemoglobin subunit epsilon (147 aa).

The Globin domain occupies 3-147 (HFTAEEKSVI…VATALAHKYH (145 aa)). Ser51 carries the phosphoserine modification. Heme b-binding residues include His64 and His93.

Belongs to the globin family. Red blood cells.

Hemoglobin epsilon chain is a beta-type chain found in early embryos. In Sus scrofa (Pig), this protein is Hemoglobin subunit epsilon (HBE1).